The primary structure comprises 134 residues: Small ribosomal subunit protein uS8c (134 aa).

It belongs to the universal ribosomal protein uS8 family. Part of the 30S ribosomal subunit.

It is found in the plastid. It localises to the chloroplast. Its function is as follows. One of the primary rRNA binding proteins, it binds directly to 16S rRNA central domain where it helps coordinate assembly of the platform of the 30S subunit. The sequence is that of Small ribosomal subunit protein uS8c (rps8) from Arabis hirsuta (Hairy rock-cress).